A 312-amino-acid chain; its full sequence is HTH-type transcriptional regulator TdcA (312 aa).

One can recognise an HTH lysR-type domain in the interval 7 to 64 (PKTQHLVVFQEVIRSGSIGSAAKELGLTQPAVSKIINDIEDYFGVELVVRKNTGVTLT). The H-T-H motif DNA-binding region spans 24–43 (IGSAAKELGLTQPAVSKIIN).

The protein belongs to the LysR transcriptional regulatory family.

It participates in amino-acid degradation; L-threonine degradation via propanoate pathway [regulation]. Transcriptional activator for the tdcABCDE operon. The sequence is that of HTH-type transcriptional regulator TdcA (tdcA) from Escherichia coli O157:H7.